We begin with the raw amino-acid sequence, 86 residues long: Testis-expressed protein 54 (86 aa).

The segment covering 1–34 has biased composition (basic and acidic residues); that stretch reads MGCCQDKNRWASDEQARDEVTEDGREGNEVDNSG. Disordered regions lie at residues 1-43 and 57-86; these read MGCC…SNES and SRRESSRSGKQDNQMQERKHEGSHKEPEKG.

Expressed in Testis.

The protein is Testis-expressed protein 54 of Mus musculus (Mouse).